Here is a 545-residue protein sequence, read N- to C-terminus: Cannabidiolic acid synthase-like 2 (545 aa).

A signal peptide spans 1-28; sequence MKCSTFCFWYVCKIIFFFLSFNIQISIA. Cysteines 37 and 99 form a disulfide. Residues N45, N65, N89, and N168 are each glycosylated (N-linked (GlcNAc...) asparagine). The FAD-binding PCMH-type domain maps to 77 to 251; that stretch reads TTPKPLVITT…AAWKIRLVAV (175 aa). Positions 114–176 form a cross-link, 6-(S-cysteinyl)-8alpha-(pros-histidyl)-FAD (His-Cys); that stretch reads HDAEGMSYIS…ENLSFPAGYC (63 aa). Residue H292 participates in substrate binding. N297, N305, N329, and N361 each carry an N-linked (GlcNAc...) asparagine glycan. Y417 is a substrate binding site. N467 carries N-linked (GlcNAc...) asparagine glycosylation. Residue Y484 is the Proton acceptor of the active site. Residue N499 is glycosylated (N-linked (GlcNAc...) asparagine).

Belongs to the oxygen-dependent FAD-linked oxidoreductase family. The cofactor is FAD. The FAD cofactor is bound via a bicovalent 6-S-cysteinyl, 8alpha-N1-histidyl FAD linkage.

It localises to the secreted. Functionally, has no cannabidiolic acid synthase activity. This Cannabis sativa (Hemp) protein is Cannabidiolic acid synthase-like 2 (CBDAS3).